Here is a 625-residue protein sequence, read N- to C-terminus: tRNA (uracil-5-)-methyltransferase homolog A (625 aa).

Disordered regions lie at residues 1–37 (MSENLDNEGPKPMESCGQESSSALSCPTVSVPPAAPA) and 145–165 (RPKADPMARRRRQEGESEPPV). The segment covering 27–37 (PTVSVPPAAPA) has biased composition (low complexity). Residues 73–146 (FKLELQNVPR…RPLSVRLARP (74 aa)) enclose the RRM domain. Residues 180–209 (YAEQLERKQLECEQVLQKLAKEIGSTNRAL) adopt a coiled-coil conformation. Residue Ser378 is modified to Phosphoserine. S-adenosyl-L-methionine-binding residues include Gln411, Glu461, and Asp510. Residue Cys538 is the Nucleophile of the active site. The active-site Proton acceptor is Glu581. Residues 594–625 (GTGVLGPHSPPAQPTPGPPDNTLQETGTFPSS) form a disordered region. Residues 601–612 (HSPPAQPTPGPP) are compositionally biased toward pro residues. Ser602 bears the Phosphoserine mark. The span at 614-625 (NTLQETGTFPSS) shows a compositional bias: polar residues.

The protein belongs to the class I-like SAM-binding methyltransferase superfamily. RNA M5U methyltransferase family.

It is found in the cytoplasm. It localises to the cytosol. It carries out the reaction uridine(54) in tRNA + S-adenosyl-L-methionine = 5-methyluridine(54) in tRNA + S-adenosyl-L-homocysteine + H(+). The enzyme catalyses a uridine in mRNA + S-adenosyl-L-methionine = a 5-methyluridine in mRNA + S-adenosyl-L-homocysteine + H(+). S-adenosyl-L-methionine-dependent methyltransferase that catalyzes the formation of 5-methyl-uridine in tRNAs and some mRNAs. Mainly catalyzes the methylation of uridine at position 54 (m5U54) in cytosolic tRNAs. Also able to mediate the formation of 5-methyl-uridine in some mRNAs. The chain is tRNA (uracil-5-)-methyltransferase homolog A from Homo sapiens (Human).